The chain runs to 60 residues: Large ribosomal subunit protein bL32 (60 aa).

This sequence belongs to the bacterial ribosomal protein bL32 family.

The polypeptide is Large ribosomal subunit protein bL32 (Streptococcus pneumoniae serotype 4 (strain ATCC BAA-334 / TIGR4)).